The sequence spans 193 residues: uncharacterized protein (193 aa).

3 disordered regions span residues 1–21, 53–96, and 114–136; these read MPKGRRGSQSPTMSQRPAPPL, GAPA…PWPS, and SGPEAAASPLAPGPMTSRLASAS. The segment covering 53 to 70 has biased composition (low complexity); sequence GAPAGGAPAAGGRSLPQG. Pro residues predominate over residues 71–95; that stretch reads PSAPAPPPPPGLGPPSERPCPPPWP. Over residues 116–127 the composition is skewed to low complexity; the sequence is PEAAASPLAPGP.

This is an uncharacterized protein from Bos taurus (Bovine).